We begin with the raw amino-acid sequence, 351 residues long: Heat-inducible transcription repressor HrcA (351 aa).

Belongs to the HrcA family.

Negative regulator of class I heat shock genes (grpE-dnaK-dnaJ and groELS operons). Prevents heat-shock induction of these operons. The polypeptide is Heat-inducible transcription repressor HrcA (Fusobacterium nucleatum subsp. nucleatum (strain ATCC 25586 / DSM 15643 / BCRC 10681 / CIP 101130 / JCM 8532 / KCTC 2640 / LMG 13131 / VPI 4355)).